The primary structure comprises 443 residues: Threonine/serine transporter TdcC (443 aa).

Transmembrane regions (helical) follow at residues 22–42 (TTWT…FFPI), 44–64 (AGFG…PIAF), 97–117 (GVVI…IYGV), 140–160 (FVAL…KDLM), 163–183 (VMSF…LSLI), 207–227 (ILVT…FSPI), 259–279 (ASLL…FTLS), 319–339 (ASII…LGTL), 366–386 (ISMI…PNIL), 389–409 (IEAM…MFAI), and 423–443 (ENLF…YKLF).

It belongs to the amino acid/polyamine transporter 2 family. SdaC/TdcC subfamily.

The protein resides in the cell inner membrane. It catalyses the reaction L-threonine(in) + H(+)(in) = L-threonine(out) + H(+)(out). It carries out the reaction L-serine(in) + H(+)(in) = L-serine(out) + H(+)(out). In terms of biological role, involved in the import of threonine and serine into the cell, with the concomitant import of a proton (symport system). This chain is Threonine/serine transporter TdcC, found in Enterobacter sp. (strain 638).